The following is a 158-amino-acid chain: Transcription factor HY5 (158 aa).

Residues 1 to 25 show a composition bias toward low complexity; the sequence is MQEQATSSIAASSLPSSSERSSSSA. The segment at 1-105 is disordered; it reads MQEQATSSIA…NRVSAQQARE (105 aa). The segment covering 26-44 has biased composition (basic and acidic residues); sequence LHHELKEGMESDDEIRRVP. The segment at 35 to 46 is interaction with COP1; sequence ESDDEIRRVPEM. The span at 47-58 shows a compositional bias: low complexity; it reads GGEATGTTSASG. The bZIP domain occupies 86-149; that stretch reads ENKRLKRLLR…QMLRHILKNT (64 aa). Residues 88 to 108 are basic motif; sequence KRLKRLLRNRVSAQQARERKK. The segment at 114 to 142 is leucine-zipper; it reads LEARVKELETKNAELEERLSTLQNENQML.

Belongs to the bZIP family. Interacts with COP1. Ubiquitinated by COP1. Ubiquitination takes place in darkness and leads to its subsequent degradation, thereby preventing to activate photomorphogenesis signals.

The protein localises to the nucleus. Functionally, transcription factor that promotes photomorphogenesis in the light and positively regulates fruit pigmentation and fruit nutritional quality. Probably acts downstream of the light receptor network and directly affects transcription of light-induced genes. This chain is Transcription factor HY5 (HY5), found in Solanum lycopersicum (Tomato).